We begin with the raw amino-acid sequence, 197 residues long: Isopentenyl-diphosphate Delta-isomerase (197 aa).

Positions 41 and 48 each coordinate Mn(2+). One can recognise a Nudix hydrolase domain in the interval 46–183 (QLHRAFSVFL…AWFMTVLDAA (138 aa)). Residue cysteine 83 is part of the active site. Histidine 85 contacts Mn(2+). Residue glutamate 103 participates in Mg(2+) binding. 2 residues coordinate Mn(2+): glutamate 130 and glutamate 132. The active site involves glutamate 132.

Belongs to the IPP isomerase type 1 family. Requires Mg(2+) as cofactor. Mn(2+) serves as cofactor.

The protein resides in the cytoplasm. The enzyme catalyses isopentenyl diphosphate = dimethylallyl diphosphate. Its pathway is isoprenoid biosynthesis; dimethylallyl diphosphate biosynthesis; dimethylallyl diphosphate from isopentenyl diphosphate: step 1/1. In terms of biological role, catalyzes the 1,3-allylic rearrangement of the homoallylic substrate isopentenyl (IPP) to its highly electrophilic allylic isomer, dimethylallyl diphosphate (DMAPP). The sequence is that of Isopentenyl-diphosphate Delta-isomerase from Streptomyces griseus subsp. griseus (strain JCM 4626 / CBS 651.72 / NBRC 13350 / KCC S-0626 / ISP 5235).